We begin with the raw amino-acid sequence, 61 residues long: Small ribosomal subunit protein uS14 (61 aa).

The Zn(2+) site is built by cysteine 24, cysteine 27, cysteine 40, and cysteine 43.

It belongs to the universal ribosomal protein uS14 family. Zinc-binding uS14 subfamily. In terms of assembly, part of the 30S ribosomal subunit. Contacts proteins S3 and S10. Zn(2+) serves as cofactor.

Binds 16S rRNA, required for the assembly of 30S particles and may also be responsible for determining the conformation of the 16S rRNA at the A site. This chain is Small ribosomal subunit protein uS14, found in Staphylococcus carnosus (strain TM300).